The chain runs to 286 residues: Ribonuclease Z (286 aa).

Residues histidine 61, histidine 63, aspartate 65, histidine 66, histidine 153, aspartate 176, and histidine 240 each contribute to the Zn(2+) site. Catalysis depends on aspartate 65, which acts as the Proton acceptor.

The protein belongs to the RNase Z family. Homodimer. It depends on Zn(2+) as a cofactor.

It catalyses the reaction Endonucleolytic cleavage of RNA, removing extra 3' nucleotides from tRNA precursor, generating 3' termini of tRNAs. A 3'-hydroxy group is left at the tRNA terminus and a 5'-phosphoryl group is left at the trailer molecule.. Its function is as follows. Zinc phosphodiesterase, which displays some tRNA 3'-processing endonuclease activity. Probably involved in tRNA maturation, by removing a 3'-trailer from precursor tRNA. This is Ribonuclease Z from Mycolicibacterium gilvum (strain PYR-GCK) (Mycobacterium gilvum (strain PYR-GCK)).